Here is a 238-residue protein sequence, read N- to C-terminus: Ribonuclease PH (238 aa).

Residues Arg86 and 124 to 126 (GTR) each bind phosphate.

The protein belongs to the RNase PH family. As to quaternary structure, homohexameric ring arranged as a trimer of dimers.

The catalysed reaction is tRNA(n+1) + phosphate = tRNA(n) + a ribonucleoside 5'-diphosphate. Functionally, phosphorolytic 3'-5' exoribonuclease that plays an important role in tRNA 3'-end maturation. Removes nucleotide residues following the 3'-CCA terminus of tRNAs; can also add nucleotides to the ends of RNA molecules by using nucleoside diphosphates as substrates, but this may not be physiologically important. Probably plays a role in initiation of 16S rRNA degradation (leading to ribosome degradation) during starvation. The polypeptide is Ribonuclease PH (Escherichia coli O6:K15:H31 (strain 536 / UPEC)).